A 357-amino-acid chain; its full sequence is D(4) dopamine receptor (357 aa).

Residues methionine 1 to alanine 32 are Extracellular-facing. A glycan (N-linked (GlcNAc...) asparagine) is linked at asparagine 3. The chain crosses the membrane as a helical span at residues leucine 33–alanine 55. The Cytoplasmic segment spans residues alanine 56–asparagine 65. The helical transmembrane segment at tyrosine 66–tyrosine 88 threads the bilayer. Aspartate 75 serves as a coordination point for Na(+). Residues serine 89–aspartate 104 are Extracellular-facing. The cysteines at positions 103 and 180 are disulfide-linked. Residues alanine 105–alanine 126 traverse the membrane as a helical segment. Serine 117 is a Na(+) binding site. Over aspartate 127–arginine 146 the chain is Cytoplasmic. Residues glutamine 147–asparagine 170 form a helical membrane-spanning segment. Over aspartate 171 to aspartate 186 the chain is Extracellular. A helical transmembrane segment spans residues tyrosine 187–tryptophan 208. Topologically, residues alanine 209 to arginine 284 are cytoplasmic. The interval leucine 225–alanine 261 is disordered. The span at proline 233–glutamate 242 shows a compositional bias: pro residues. Positions alanine 243 to threonine 259 are enriched in low complexity. Residues valine 285 to glycine 307 traverse the membrane as a helical segment. Over alanine 308 to proline 316 the chain is Extracellular. Cysteine 310 and cysteine 313 are joined by a disulfide. Residues proline 317–threonine 339 form a helical membrane-spanning segment. The Cytoplasmic segment spans residues valine 340 to cysteine 357. Residue cysteine 357 is the site of S-palmitoyl cysteine attachment.

Belongs to the G-protein coupled receptor 1 family. As to quaternary structure, forms homo- and heterooligomers with DRD2. D4.7 allele exhibits higher affinity for homodimers compared to DRD2 heterodimers, while alleles D42. and 4.4 have similar affinities for both. The interaction with DRD2 may modulate agonist-induced downstream signaling. Interacts with CLIC6. Interacts with GPRASP1. May interact with ADORA2A. Interacts with KLHL12. In terms of processing, polyubiquitinated by the BCR(KLHL12) E3 ubiquitin ligase complex: polyubiquitination does not lead to degradation of DRD4 protein. Palmitoylated. Palmitoylation of the C-terminal Cys is important for normal expression at the cell membrane.

It localises to the cell membrane. Functionally, dopamine receptor responsible for neuronal signaling in the mesolimbic system of the brain, an area of the brain that regulates emotion and complex behavior. Activated by dopamine, but also by epinephrine and norepinephrine, and by numerous synthetic agonists and drugs. Agonist binding triggers signaling via G proteins that inhibit adenylyl cyclase. Modulates the circadian rhythm of contrast sensitivity by regulating the rhythmic expression of NPAS2 in the retinal ganglion cells. The protein is D(4) dopamine receptor (DRD4) of Mustela putorius furo (European domestic ferret).